The chain runs to 647 residues: Macrolide export ATP-binding/permease protein MacB (647 aa).

The region spanning 7 to 245 is the ABC transporter domain; the sequence is IRLEDICKTF…EATLQPHEEI (239 aa). 43 to 50 is an ATP binding site; it reads GASGSGKS. Helical transmembrane passes span 274–294, 529–549, 573–593, and 610–630; these read VLTL…LAIG, VAAI…LVSV, FIIE…ILGL, and FGPV…FGFL.

Belongs to the ABC transporter superfamily. Macrolide exporter (TC 3.A.1.122) family. In terms of assembly, homodimer.

It localises to the cell inner membrane. Functionally, non-canonical ABC transporter that contains transmembrane domains (TMD), which form a pore in the inner membrane, and an ATP-binding domain (NBD), which is responsible for energy generation. Confers resistance against macrolides. The chain is Macrolide export ATP-binding/permease protein MacB from Brucella melitensis biotype 1 (strain ATCC 23456 / CCUG 17765 / NCTC 10094 / 16M).